The chain runs to 167 residues: Lipoprotein signal peptidase (167 aa).

Helical transmembrane passes span 56-76 (FAPP…VLVF) and 84-104 (TPIF…NMID). Residues aspartate 113 and aspartate 139 contribute to the active site. The chain crosses the membrane as a helical span at residues 132–152 (WPIFNVADSAITIGACMLVLF).

This sequence belongs to the peptidase A8 family.

It localises to the cell inner membrane. The catalysed reaction is Release of signal peptides from bacterial membrane prolipoproteins. Hydrolyzes -Xaa-Yaa-Zaa-|-(S,diacylglyceryl)Cys-, in which Xaa is hydrophobic (preferably Leu), and Yaa (Ala or Ser) and Zaa (Gly or Ala) have small, neutral side chains.. Its pathway is protein modification; lipoprotein biosynthesis (signal peptide cleavage). In terms of biological role, this protein specifically catalyzes the removal of signal peptides from prolipoproteins. The protein is Lipoprotein signal peptidase of Chlorobium luteolum (strain DSM 273 / BCRC 81028 / 2530) (Pelodictyon luteolum).